Reading from the N-terminus, the 121-residue chain is Small ribosomal subunit protein uS13 (121 aa).

The segment at 89–121 is disordered; the sequence is MRHRRGLPVRGQHTKNNARTRKGKAVSIAGKKK.

This sequence belongs to the universal ribosomal protein uS13 family. Part of the 30S ribosomal subunit. Forms a loose heterodimer with protein S19. Forms two bridges to the 50S subunit in the 70S ribosome.

Functionally, located at the top of the head of the 30S subunit, it contacts several helices of the 16S rRNA. In the 70S ribosome it contacts the 23S rRNA (bridge B1a) and protein L5 of the 50S subunit (bridge B1b), connecting the 2 subunits; these bridges are implicated in subunit movement. Contacts the tRNAs in the A and P-sites. The polypeptide is Small ribosomal subunit protein uS13 (Levilactobacillus brevis (strain ATCC 367 / BCRC 12310 / CIP 105137 / JCM 1170 / LMG 11437 / NCIMB 947 / NCTC 947) (Lactobacillus brevis)).